The primary structure comprises 261 residues: Ribosomal RNA small subunit methyltransferase J (261 aa).

S-adenosyl-L-methionine is bound by residues 109 to 110 (RD), 125 to 126 (ER), and aspartate 179.

The protein belongs to the methyltransferase superfamily. RsmJ family.

The protein localises to the cytoplasm. The enzyme catalyses guanosine(1516) in 16S rRNA + S-adenosyl-L-methionine = N(2)-methylguanosine(1516) in 16S rRNA + S-adenosyl-L-homocysteine + H(+). Specifically methylates the guanosine in position 1516 of 16S rRNA. This Pseudomonas paraeruginosa (strain DSM 24068 / PA7) (Pseudomonas aeruginosa (strain PA7)) protein is Ribosomal RNA small subunit methyltransferase J.